The following is a 229-amino-acid chain: Thymidylate kinase (229 aa).

Residue 9–16 (GPEGSGKS) participates in ATP binding.

The protein belongs to the thymidylate kinase family.

The enzyme catalyses dTMP + ATP = dTDP + ADP. Functionally, phosphorylation of dTMP to form dTDP in both de novo and salvage pathways of dTTP synthesis. This Roseiflexus castenholzii (strain DSM 13941 / HLO8) protein is Thymidylate kinase.